Here is a 295-residue protein sequence, read N- to C-terminus: ATP synthase gamma chain (295 aa).

This sequence belongs to the ATPase gamma chain family. In terms of assembly, F-type ATPases have 2 components, CF(1) - the catalytic core - and CF(0) - the membrane proton channel. CF(1) has five subunits: alpha(3), beta(3), gamma(1), delta(1), epsilon(1). CF(0) has three main subunits: a, b and c.

Its subcellular location is the cell inner membrane. Functionally, produces ATP from ADP in the presence of a proton gradient across the membrane. The gamma chain is believed to be important in regulating ATPase activity and the flow of protons through the CF(0) complex. The polypeptide is ATP synthase gamma chain (Sulfurimonas denitrificans (strain ATCC 33889 / DSM 1251) (Thiomicrospira denitrificans (strain ATCC 33889 / DSM 1251))).